Here is an 822-residue protein sequence, read N- to C-terminus: Ras GTPase-activating-like protein rgaA (822 aa).

Residues 1–36 (MNKEEYSDISDSESEEVHETNNHNEHEHEEEDDTPE) form a disordered region. Over residues 15–27 (EEVHETNNHNEHE) the composition is skewed to basic and acidic residues. The stretch at 104–152 (EDKESDWIAEIQELKRNLVSEVRRNHTLERDLNRLDKRIALLIKNRGNI) forms a coiled coil. Positions 161 to 822 (GLKAPKHKGD…IHLLNKLFLY (662 aa)) are required for interaction to rac1A. The 244-residue stretch at 234 to 477 (FLLLSLYRLS…GDIKNYLQEI (244 aa)) folds into the Ras-GAP domain.

As to quaternary structure, heterotetramer. Quaternary complex with activated rac1A, ctxA and ctxB. Interacts directly with rac1A and ctxA. Preferentially interacts with activated forms of rac1A, rac1B and rac1C. Interacts with racE.

The protein localises to the cytoplasm. The protein resides in the cell cortex. It is found in the cleavage furrow. In terms of biological role, part of signaling pathway that is required for completion of cytokinesis. gapA and rgaA control cortexillin localization to the cleavage furrow and hence may be involved in cleavage of the midbody in the final stage of cytokinesis by regulating the actin cytoskeleton. Forms a complex by linking activated rac1A to ctxA. Assembly of this complex is necessary for the recruitment of cortexillin to the midzone of a dividing cell. Overexpression leads to the suppression of the formation of cellular projections containing F-actin and to a defect in cytokinesis. The chain is Ras GTPase-activating-like protein rgaA (rgaA) from Dictyostelium discoideum (Social amoeba).